Consider the following 205-residue polypeptide: Cytochrome bo(3) ubiquinol oxidase subunit 3 (205 aa).

Residues 1 to 26 are Cytoplasmic-facing; the sequence is MIENKFNNTILNSNSSTHDKISETKK. Residues 27-47 traverse the membrane as a helical segment; that stretch reads LFGLWIYLMSDCIMFAVLFAV. The Extracellular segment spans residues 48-69; the sequence is YAIVSSNISINLISNKIFNLSS. A helical membrane pass occupies residues 70-90; the sequence is ILLETFLLLLSSLSCGFVVIA. Over 91–97 the chain is Cytoplasmic; the sequence is MNQKRIK. A helical transmembrane segment spans residues 98–118; that stretch reads MIYSFLTITFIFGLIFLLMEV. Residues 119–138 lie on the Extracellular side of the membrane; sequence HEFYELIIENFGPDKNAFFS. A helical membrane pass occupies residues 139-159; the sequence is IFFTLVATHGVHIFFGLILIL. The Cytoplasmic portion of the chain corresponds to 160–177; that stretch reads SILYQIKKLGLTNSIRTR. Residues 178-198 form a helical membrane-spanning segment; sequence ILCFSVFWHFLDIIWICVFTF. Topologically, residues 199–205 are extracellular; it reads VYLNGAI.

The protein belongs to the cytochrome c oxidase subunit 3 family. As to quaternary structure, heterooctamer of two A chains, two B chains, two C chains and two D chains.

It is found in the cell membrane. Functionally, cytochrome bo(3) ubiquinol terminal oxidase is the component of the aerobic respiratory chain of E.coli that predominates when cells are grown at high aeration. Has proton pump activity across the membrane in addition to electron transfer, pumping 2 protons/electron. This chain is Cytochrome bo(3) ubiquinol oxidase subunit 3 (cyoC), found in Buchnera aphidicola subsp. Acyrthosiphon pisum (strain APS) (Acyrthosiphon pisum symbiotic bacterium).